A 205-amino-acid chain; its full sequence is Carboxysome shell protein CsoS1D (205 aa).

BMC circularly permuted domains are found at residues 3–100 (ELRT…TREY) and 106–205 (VVMW…TCRS). A Gates the pore motif is present at residues 68 to 69 (ER).

It belongs to the EutL/PduB family. As to quaternary structure, homotrimer. Forms a dimer of stacked trimers, the same faces interact. Probably forms a CsoS1-CsoS1D-CsoS2 complex.

It is found in the carboxysome. In terms of biological role, part of the carboxysome shell, a polyhedral inclusion where RuBisCO (ribulose bisphosphate carboxylase, cbbL-cbbS) is sequestered. It may control transport of RuBisCO reactants in and out of the carboxysome. The polypeptide is Carboxysome shell protein CsoS1D (Hydrogenovibrio crunogenus (strain DSM 25203 / XCL-2) (Thiomicrospira crunogena)).